Consider the following 274-residue polypeptide: Large ribosomal subunit protein uL2cz/uL2cy (274 aa).

Disordered regions lie at residues Met-1 to Val-22 and Asn-224 to Lys-274.

This sequence belongs to the universal ribosomal protein uL2 family. Part of the 50S ribosomal subunit.

The protein localises to the plastid. It localises to the chloroplast. The sequence is that of Large ribosomal subunit protein uL2cz/uL2cy (rpl2-A) from Helianthus annuus (Common sunflower).